Consider the following 357-residue polypeptide: Alanine racemase (357 aa).

The active-site Proton acceptor; specific for D-alanine is the lysine 33. Lysine 33 is subject to N6-(pyridoxal phosphate)lysine. Position 129 (arginine 129) interacts with substrate. Tyrosine 253 acts as the Proton acceptor; specific for L-alanine in catalysis. Methionine 301 contacts substrate.

It belongs to the alanine racemase family. It depends on pyridoxal 5'-phosphate as a cofactor.

The catalysed reaction is L-alanine = D-alanine. It functions in the pathway amino-acid biosynthesis; D-alanine biosynthesis; D-alanine from L-alanine: step 1/1. Functionally, catalyzes the interconversion of L-alanine and D-alanine. May also act on other amino acids. In Pseudomonas fluorescens (strain ATCC BAA-477 / NRRL B-23932 / Pf-5), this protein is Alanine racemase (alr).